A 159-amino-acid chain; its full sequence is Cyclic pyranopterin monophosphate synthase (159 aa).

Substrate-binding positions include 75–77 and 113–114; these read LCH and ME. D128 is a catalytic residue.

This sequence belongs to the MoaC family. As to quaternary structure, homohexamer; trimer of dimers.

It catalyses the reaction (8S)-3',8-cyclo-7,8-dihydroguanosine 5'-triphosphate = cyclic pyranopterin phosphate + diphosphate. The protein operates within cofactor biosynthesis; molybdopterin biosynthesis. Its function is as follows. Catalyzes the conversion of (8S)-3',8-cyclo-7,8-dihydroguanosine 5'-triphosphate to cyclic pyranopterin monophosphate (cPMP). This chain is Cyclic pyranopterin monophosphate synthase, found in Serratia proteamaculans (strain 568).